The following is a 177-amino-acid chain: Early nodulin-like protein 15 (177 aa).

Residues 1–24 (MASSSLLVTIFLCISVFFFSSVNA) form the signal peptide. Positions 25 to 129 (NEVTVGGKSG…GQKLRLVVIT (105 aa)) constitute a Phytocyanin domain. A disulfide bridge connects residues cysteine 83 and cysteine 117. Asparagine 84 is a glycosylation site (N-linked (GlcNAc...) asparagine). Residue serine 153 is the site of GPI-anchor amidated serine attachment. The propeptide at 154–177 (GAAKLAGGFSVVFGLVLGLWAFFF) is removed in mature form.

It belongs to the early nodulin-like (ENODL) family. As to expression, mostly expressed in seedlings, siliques and flowers, and, to a lower extent, in roots, stems and seeds, but barely in leaves.

Its subcellular location is the cell membrane. In terms of biological role, may act as a carbohydrate transporter. Required, together with ENODL11, ENODL12, ENODL13, ENODL14 and ENODL15, for male-female communication and pollen tube reception and burst at the synergid cell surface of the female gametophyte. The protein is Early nodulin-like protein 15 of Arabidopsis thaliana (Mouse-ear cress).